Reading from the N-terminus, the 629-residue chain is Acetylcholinesterase (629 aa).

The signal sequence occupies residues 1–38 (MGQLSILCLFVTVCASVCGYSWPSDETTTKPSQFKDFH). Cys103 and Cys130 are disulfide-bonded. The N-linked (GlcNAc...) asparagine glycan is linked to Asn125. Ser253 serves as the catalytic Acyl-ester intermediate. Cys307 and Cys322 are disulfide-bonded. An N-linked (GlcNAc...) asparagine glycan is attached at Asn308. The Charge relay system role is filled by Glu382. Asn418 carries N-linked (GlcNAc...) asparagine glycosylation. Cys458 and Cys574 are oxidised to a cystine. The active-site Charge relay system is the His496. A glycan (N-linked (GlcNAc...) asparagine) is linked at Asn509. A lipid anchor (GPI-anchor amidated serine) is attached at Ser605. The propeptide at 606 to 629 (SSNELLPPSTSLVLIWIMTLLNAL) is removed in mature form.

Belongs to the type-B carboxylesterase/lipase family. Homodimer; disulfide-linked. The N-terminus is blocked.

Its subcellular location is the synapse. The protein localises to the cell membrane. It catalyses the reaction acetylcholine + H2O = choline + acetate + H(+). In terms of biological role, rapidly hydrolyzes choline released into the synapse. This chain is Acetylcholinesterase, found in Leptinotarsa decemlineata (Colorado potato beetle).